Here is a 312-residue protein sequence, read N- to C-terminus: Olfactory receptor 7G3 (312 aa).

The Extracellular portion of the chain corresponds to 1–25 (MKAGNFSDTPEFFLLGLSGDPELQP). N-linked (GlcNAc...) asparagine glycosylation occurs at asparagine 5. The helical transmembrane segment at 26 to 46 (ILFMLFLSMYLATMLGNLLII) threads the bilayer. The Cytoplasmic portion of the chain corresponds to 47–54 (LAVNSDSH). Residues 55 to 75 (LHTPMYFLLSILSLVDICFTS) traverse the membrane as a helical segment. The Extracellular portion of the chain corresponds to 76–99 (TTMPKMLVNIQAQAQSINYTGCLT). A glycan (N-linked (GlcNAc...) asparagine) is linked at asparagine 93. A disulfide bridge links cysteine 97 with cysteine 189. Residues 100-120 (QICFVLVFVGLENGILVMMAY) form a helical membrane-spanning segment. The Cytoplasmic portion of the chain corresponds to 121-139 (DRFVAICHPLRYNVIMNPK). The helical transmembrane segment at 140–160 (LCGLLLLLSFIVSVLDALLHT) threads the bilayer. Topologically, residues 161-197 (LMVLQLTFCIDLEIPHFFCELAHILKLACSDVLINNI) are extracellular. The chain crosses the membrane as a helical span at residues 198–217 (LVYLVTSLLGVVPLSGIIFS). The Cytoplasmic portion of the chain corresponds to 218–237 (YTRIVSSVMKIPSAGGKYKA). The helical transmembrane segment at 238 to 258 (FSICGSHLIVVSLFYGTGFGV) threads the bilayer. Over 259–271 (YLSSGATHSSRKG) the chain is Extracellular. Residues 272 to 292 (AIASVMYTVVTPMLNPLIYSL) form a helical membrane-spanning segment. Residues 293–312 (RNKDMLKALRKLISRIPSFH) are Cytoplasmic-facing.

This sequence belongs to the G-protein coupled receptor 1 family.

It localises to the cell membrane. Its function is as follows. Odorant receptor. This Homo sapiens (Human) protein is Olfactory receptor 7G3 (OR7G3).